Here is a 342-residue protein sequence, read N- to C-terminus: N-acetyl-gamma-glutamyl-phosphate reductase (342 aa).

Residue C146 is part of the active site.

This sequence belongs to the NAGSA dehydrogenase family. Type 1 subfamily.

The protein resides in the cytoplasm. It carries out the reaction N-acetyl-L-glutamate 5-semialdehyde + phosphate + NADP(+) = N-acetyl-L-glutamyl 5-phosphate + NADPH + H(+). It functions in the pathway amino-acid biosynthesis; L-arginine biosynthesis; N(2)-acetyl-L-ornithine from L-glutamate: step 3/4. In terms of biological role, catalyzes the NADPH-dependent reduction of N-acetyl-5-glutamyl phosphate to yield N-acetyl-L-glutamate 5-semialdehyde. The sequence is that of N-acetyl-gamma-glutamyl-phosphate reductase from Frankia casuarinae (strain DSM 45818 / CECT 9043 / HFP020203 / CcI3).